A 122-amino-acid polypeptide reads, in one-letter code: MIQPQTYLEVADNTGARKIMCIRVLKGSNAKYATVGDVIVASVKEAIPRGAVKEGDVVKAVVVRTKKEVKRPDGSAIRFDDNAAVIINNQLEPRGTRVFGPVARELREKGFMKIVSLAPEVL.

This sequence belongs to the universal ribosomal protein uL14 family. As to quaternary structure, part of the 50S ribosomal subunit. Forms a cluster with proteins L3 and L19. In the 70S ribosome, L14 and L19 interact and together make contacts with the 16S rRNA in bridges B5 and B8.

In terms of biological role, binds to 23S rRNA. Forms part of two intersubunit bridges in the 70S ribosome. The sequence is that of Large ribosomal subunit protein uL14 from Thermus aquaticus.